The primary structure comprises 132 residues: uncharacterized protein (132 aa).

This is an uncharacterized protein from Saccharomyces cerevisiae (strain ATCC 204508 / S288c) (Baker's yeast).